A 202-amino-acid chain; its full sequence is Small ribosomal subunit protein uS4 (202 aa).

The segment at Leu-15–Ser-43 is disordered. One can recognise an S4 RNA-binding domain in the interval Gly-90–Asn-152.

The protein belongs to the universal ribosomal protein uS4 family. In terms of assembly, part of the 30S ribosomal subunit. Contacts protein S5. The interaction surface between S4 and S5 is involved in control of translational fidelity.

Functionally, one of the primary rRNA binding proteins, it binds directly to 16S rRNA where it nucleates assembly of the body of the 30S subunit. With S5 and S12 plays an important role in translational accuracy. The protein is Small ribosomal subunit protein uS4 of Prochlorococcus marinus (strain SARG / CCMP1375 / SS120).